A 251-amino-acid chain; its full sequence is Triosephosphate isomerase (251 aa).

Asn9–Lys11 is a binding site for substrate. The active-site Electrophile is His94. Catalysis depends on Glu166, which acts as the Proton acceptor. Substrate is bound by residues Gly172, Ser211, and Gly232–Gly233.

This sequence belongs to the triosephosphate isomerase family. In terms of assembly, homodimer.

It localises to the cytoplasm. The enzyme catalyses D-glyceraldehyde 3-phosphate = dihydroxyacetone phosphate. Its pathway is carbohydrate biosynthesis; gluconeogenesis. It functions in the pathway carbohydrate degradation; glycolysis; D-glyceraldehyde 3-phosphate from glycerone phosphate: step 1/1. In terms of biological role, involved in the gluconeogenesis. Catalyzes stereospecifically the conversion of dihydroxyacetone phosphate (DHAP) to D-glyceraldehyde-3-phosphate (G3P). The sequence is that of Triosephosphate isomerase from Stenotrophomonas maltophilia (strain R551-3).